The sequence spans 64 residues: Large ribosomal subunit protein bL33c (64 aa).

The protein belongs to the bacterial ribosomal protein bL33 family.

The protein localises to the plastid. It is found in the chloroplast. This Thalassiosira pseudonana (Marine diatom) protein is Large ribosomal subunit protein bL33c.